A 468-amino-acid polypeptide reads, in one-letter code: 6-phosphogluconate dehydrogenase, decarboxylating (468 aa).

Residues 10–15 (GMAVMG), 33–35 (NRS), 74–76 (IKS), and asparagine 102 contribute to the NADP(+) site. Substrate contacts are provided by residues asparagine 102 and 128–130 (SGG). Lysine 182 (proton acceptor) is an active-site residue. 185 to 186 (HN) contacts substrate. The active-site Proton donor is glutamate 189. Residues tyrosine 190, lysine 259, arginine 286, arginine 445, and histidine 451 each coordinate substrate.

It belongs to the 6-phosphogluconate dehydrogenase family. In terms of assembly, homodimer.

It carries out the reaction 6-phospho-D-gluconate + NADP(+) = D-ribulose 5-phosphate + CO2 + NADPH. Its pathway is carbohydrate degradation; pentose phosphate pathway; D-ribulose 5-phosphate from D-glucose 6-phosphate (oxidative stage): step 3/3. In terms of biological role, catalyzes the oxidative decarboxylation of 6-phosphogluconate to ribulose 5-phosphate and CO(2), with concomitant reduction of NADP to NADPH. The chain is 6-phosphogluconate dehydrogenase, decarboxylating (gnd) from Buchnera aphidicola subsp. Baizongia pistaciae (strain Bp).